The primary structure comprises 558 residues: Ubiquitin carboxyl-terminal hydrolase 30 homolog (558 aa).

The chain crosses the membrane as a helical span at residues I6–P26. Residues A39 to G550 form the USP domain. The active-site Nucleophile is C48. The interval L267–S300 is disordered. Over residues P280–Q289 the composition is skewed to low complexity. The active-site Proton acceptor is the H506.

It belongs to the peptidase C19 family.

The protein localises to the mitochondrion outer membrane. It catalyses the reaction Thiol-dependent hydrolysis of ester, thioester, amide, peptide and isopeptide bonds formed by the C-terminal Gly of ubiquitin (a 76-residue protein attached to proteins as an intracellular targeting signal).. Its function is as follows. Deubiquitinating enzyme that acts as a key inhibitor of mitophagy by counteracting the action of parkin (park). The sequence is that of Ubiquitin carboxyl-terminal hydrolase 30 homolog from Drosophila melanogaster (Fruit fly).